The following is a 468-amino-acid chain: MGFLGTGTWILVLVLPIQAFPKPGGSQDKSLHNRELSAERPLNEQIAEAEEDKIKKTYPPENKPGQSNYSFVDNLNLLKAITEKEKIEKERQSIRSSPLDNKLNVEDVDSTKNRKLIDDYDSTKSGLDHKFQDDPDGLHQLDGTPLTAEDIVHKIAARIYEENDRAVFDKIVSKLLNLGLITESQAHTLEDEVAEVLQKLISKEANNYEEDPNKPTSWTENQAGKIPEKVTPMAAIQDGLAKGENDETVSNTLTLTNGLERRTKTYSEDNFEELQYFPNFYALLKSIDSEKEAKEKETLITIMKTLIDFVKMMVKYGTISPEEGVSYLENLDEMIALQTKNKLEKNATDNISKLFPAPSEKSHEETDSTKEEAAKMEKEYGSLKDSTKDDNSNPGGKTDEPKGKTEAYLEAIRKNIEWLKKHDKKGNKEDYDLSKMRDFINKQADAYVEKGILDKEEAEAIKRIYSSL.

Positions M1–A19 are cleaved as a signal peptide. The interval P23–Y69 is disordered. The span at K29–L42 shows a compositional bias: basic and acidic residues. S37 bears the Phosphoserine mark. S37 carries an O-linked (Xyl...) (chondroitin sulfate) serine glycan. O-linked (GalNAc...) threonine glycans are attached at residues T216 and T231. The tract at residues K353–E406 is disordered. The O-linked (GalNAc...) serine glycan is linked to S359. Over residues E360–E406 the composition is skewed to basic and acidic residues. Residue S362 is modified to Phosphoserine.

In terms of assembly, interacts with CHGA. Interacts with secretogranin II/SCG2. Interacts (via C-terminus) with CPE. In terms of processing, O-glycosylated. Detected in urine (at protein level). Expressed in brain, heart, kidney, liver and skeletal muscle.

It is found in the cytoplasmic vesicle. The protein localises to the secretory vesicle. The protein resides in the secretory vesicle membrane. Its subcellular location is the secreted. Functionally, member of the granin protein family that regulates the biogenesis of secretory granules. Acts as a sorting receptor for intragranular proteins including chromogranin A/CHGA. May also play a role in angiogenesis. Promotes endothelial proliferation, migration and tube formation through MEK/ERK signaling pathway. This Homo sapiens (Human) protein is Secretogranin-3 (SCG3).